The chain runs to 296 residues: Acetylglutamate kinase (296 aa).

Substrate contacts are provided by residues Gly67–Gly68, Arg89, and Asn194.

The protein belongs to the acetylglutamate kinase family. ArgB subfamily.

It is found in the cytoplasm. The catalysed reaction is N-acetyl-L-glutamate + ATP = N-acetyl-L-glutamyl 5-phosphate + ADP. It participates in amino-acid biosynthesis; L-arginine biosynthesis; N(2)-acetyl-L-ornithine from L-glutamate: step 2/4. Its function is as follows. Catalyzes the ATP-dependent phosphorylation of N-acetyl-L-glutamate. The protein is Acetylglutamate kinase of Brucella anthropi (strain ATCC 49188 / DSM 6882 / CCUG 24695 / JCM 21032 / LMG 3331 / NBRC 15819 / NCTC 12168 / Alc 37) (Ochrobactrum anthropi).